The following is a 601-amino-acid chain: UvrABC system protein C (601 aa).

The 79-residue stretch at 17–95 folds into the GIY-YIG domain; that stretch reads TLPGVYRMLD…IKALAPRYNI (79 aa). The region spanning 204–239 is the UVR domain; sequence SELINELTRRMTAAAEAMAFEQAAELRDQIQALARV.

It belongs to the UvrC family. In terms of assembly, interacts with UvrB in an incision complex.

It is found in the cytoplasm. Functionally, the UvrABC repair system catalyzes the recognition and processing of DNA lesions. UvrC both incises the 5' and 3' sides of the lesion. The N-terminal half is responsible for the 3' incision and the C-terminal half is responsible for the 5' incision. The protein is UvrABC system protein C of Chromobacterium violaceum (strain ATCC 12472 / DSM 30191 / JCM 1249 / CCUG 213 / NBRC 12614 / NCIMB 9131 / NCTC 9757 / MK).